Here is a 484-residue protein sequence, read N- to C-terminus: MAASGDPGSAESYRSPLAARYASREMCFLFSDRYKFQTWRQLWLWLAEAEQTLGLPITDEQIQEMKSNLNNIDFQMAAEEEKRLRHDVMAHVHTFGHCCPKAAGIIHLGATSCYVGDNTDLIILRNAFDLLLPKLARVISRLADFAKDRADLPTLGFTHFQPAQLTTVGKRCCLWIQDLCMDLQNLKRVRDELRFRGVKGTTGTQASFLQLFEGDHQKVEQLDKMVTEKAGFKRAFIITGQTYTRKVDIEVLSVLASLGASVHKICTDIRLLANLKEMEEPFEKQQIGSSAMPYKRNPMRSERCCSLARHLMALTMDPLQTASVQWFERTLDDSANRRICLAEAFLTADTILNTLQNISEGLVVYPKVIERRIRQELPFMATENIIMAMVKAGGSRQDCHEKIRVLSQQAAAVVKQEGGDNDLIERIRADAYFSPIHSQLEHLLDPSSFTGRAPQQVHRFLEEEVRPLLKPYGNEMAVKAELCL.

A2 is modified (N-acetylalanine). Residues 20 to 21 (RY), 85 to 87 (RHD), and 111 to 112 (TS) each bind substrate. Residue K147 is modified to N6-acetyllysine. The Proton donor/acceptor role is filled by H159. Q241 contacts substrate. S289 (proton donor/acceptor) is an active-site residue. K295 is subject to N6-acetyllysine. Residues R303, R329, S334, and R338 each coordinate substrate. K415 participates in a covalent cross-link: Glycyl lysine isopeptide (Lys-Gly) (interchain with G-Cter in SUMO1).

Belongs to the lyase 1 family. Adenylosuccinate lyase subfamily. Homotetramer. Residues from neighboring subunits contribute catalytic and substrate-binding residues to each active site.

It carries out the reaction N(6)-(1,2-dicarboxyethyl)-AMP = fumarate + AMP. The catalysed reaction is (2S)-2-[5-amino-1-(5-phospho-beta-D-ribosyl)imidazole-4-carboxamido]succinate = 5-amino-1-(5-phospho-beta-D-ribosyl)imidazole-4-carboxamide + fumarate. It participates in purine metabolism; AMP biosynthesis via de novo pathway; AMP from IMP: step 2/2. It functions in the pathway purine metabolism; IMP biosynthesis via de novo pathway; 5-amino-1-(5-phospho-D-ribosyl)imidazole-4-carboxamide from 5-amino-1-(5-phospho-D-ribosyl)imidazole-4-carboxylate: step 2/2. Catalyzes two non-sequential steps in de novo AMP synthesis: converts (S)-2-(5-amino-1-(5-phospho-D-ribosyl)imidazole-4-carboxamido)succinate (SAICAR) to fumarate plus 5-amino-1-(5-phospho-D-ribosyl)imidazole-4-carboxamide, and thereby also contributes to de novo IMP synthesis, and converts succinyladenosine monophosphate (SAMP) to AMP and fumarate. The chain is Adenylosuccinate lyase (Adsl) from Mus musculus (Mouse).